A 67-amino-acid polypeptide reads, in one-letter code: Alpha-like toxin Lqh3 (67 aa).

The 65-residue stretch at 2 to 66 (RDGYIAQPEN…GIIVEGEKCH (65 aa)) folds into the LCN-type CS-alpha/beta domain. Disulfide bonds link C12–C65, C16–C37, C23–C47, and C27–C49. The residue at position 67 (S67) is a Serine amide.

Belongs to the long (4 C-C) scorpion toxin superfamily. Sodium channel inhibitor family. Alpha subfamily. In terms of assembly, monomer. Expressed by the venom gland.

The protein resides in the secreted. Alpha toxins bind voltage-independently at site-3 of sodium channels (Nav) and inhibit the inactivation of the activated channels, thereby blocking neuronal transmission. The dissociation is voltage-dependent. This alpha-like toxin is highly toxic to insects and competes with LqhaIT on binding to insect sodium channels. Differs from classical anti-mammalian alpha-toxins as it inhibits sodium channel inactivation in cell bodies of hippocampus brain neurons, on which the anti-mammalian Lqh2 is inactive, and is unable to affect Nav1.2 in the rat brain, on which Lqh2 is highly active. Moreover, its pharmacological properties are unique in that its binding affinity for insect channels drops &gt;30-fold at pH 8.5 versus pH 6.5, and its rate of association with receptor site-3 on both insect and mammalian sodium channels is 4-15-fold slower compared with LqhaIT and Lqh2. This Leiurus hebraeus (Hebrew deathstalker scorpion) protein is Alpha-like toxin Lqh3.